The sequence spans 100 residues: Large ribosomal subunit protein uL23 (100 aa).

This sequence belongs to the universal ribosomal protein uL23 family. As to quaternary structure, part of the 50S ribosomal subunit. Contacts protein L29, and trigger factor when it is bound to the ribosome.

Its function is as follows. One of the early assembly proteins it binds 23S rRNA. One of the proteins that surrounds the polypeptide exit tunnel on the outside of the ribosome. Forms the main docking site for trigger factor binding to the ribosome. The polypeptide is Large ribosomal subunit protein uL23 (Pectobacterium atrosepticum (strain SCRI 1043 / ATCC BAA-672) (Erwinia carotovora subsp. atroseptica)).